Consider the following 341-residue polypeptide: HTH-type transcriptional repressor CytR (341 aa).

The 55-residue stretch at 10–64 (ATMKDVALKAKVSTATVSRALMNPDKVSQATRNRVEKAAREVGYLPQPMGRNVKR) folds into the HTH lacI-type domain. The segment at residues 12–31 (MKDVALKAKVSTATVSRALM) is a DNA-binding region (H-T-H motif).

Its function is as follows. This protein negatively controls the transcription initiation of genes such as deoCABD, udp, and cdd encoding catabolizing enzymes and nupC, nupG, and tsx encoding transporting and pore-forming proteins. Binds cytidine and adenosine as effectors. The sequence is that of HTH-type transcriptional repressor CytR (cytR) from Escherichia coli (strain K12).